We begin with the raw amino-acid sequence, 304 residues long: Small glutamine-rich tetratricopeptide repeat-containing protein beta (304 aa).

4 TPR repeats span residues 15–49 (LREQSQMDAYTSDEQESLEVAIQCLETVFKISPED), 85–118 (ADQLKDEGNNHMKEENYAAAVDCYTQAIELDPNN), 120–152 (VYYCNRAAAQSKLSHYTDAIKDCEKAIAIDSKY), and 153–186 (SKAYGRMGLALTAMNKFEEAVTSYQKALDLDPEN). Lys131 carries the post-translational modification N6-acetyllysine. Ser293, Ser295, and Ser297 each carry phosphoserine.

Belongs to the SGT family. In terms of assembly, homooligomerize. In terms of tissue distribution, expressed specifically in brain.

Its function is as follows. Co-chaperone that binds directly to HSC70 and HSP70 and regulates their ATPase activity. The chain is Small glutamine-rich tetratricopeptide repeat-containing protein beta (Sgtb) from Rattus norvegicus (Rat).